The primary structure comprises 208 residues: uncharacterized protein (208 aa).

Disordered stretches follow at residues 1–78 and 154–208; these read MDLF…SPTE and RRRS…PRNY. Residues 40-51 are compositionally biased toward basic residues; it reads KNHKKAQPRRTT. Residues 179-197 are compositionally biased toward polar residues; the sequence is ANSSSPNPTATGSETSYGS.

This is an uncharacterized protein from Caenorhabditis elegans.